The chain runs to 466 residues: Glutamate--tRNA ligase 2 (466 aa).

Residues 9–19 (PSPTGYLHVGG) carry the 'HIGH' region motif. The short motif at 234 to 238 (PLSKR) is the 'KMSKS' region element. ATP is bound at residue lysine 237.

Belongs to the class-I aminoacyl-tRNA synthetase family. Glutamate--tRNA ligase type 1 subfamily. Monomer.

The protein localises to the cytoplasm. The catalysed reaction is tRNA(Glu) + L-glutamate + ATP = L-glutamyl-tRNA(Glu) + AMP + diphosphate. Its function is as follows. Catalyzes the attachment of glutamate to tRNA(Glu) in a two-step reaction: glutamate is first activated by ATP to form Glu-AMP and then transferred to the acceptor end of tRNA(Glu). This Pseudothermotoga lettingae (strain ATCC BAA-301 / DSM 14385 / NBRC 107922 / TMO) (Thermotoga lettingae) protein is Glutamate--tRNA ligase 2.